The sequence spans 119 residues: Ribonuclease P protein component (119 aa).

This sequence belongs to the RnpA family. As to quaternary structure, consists of a catalytic RNA component (M1 or rnpB) and a protein subunit.

It carries out the reaction Endonucleolytic cleavage of RNA, removing 5'-extranucleotides from tRNA precursor.. Its function is as follows. RNaseP catalyzes the removal of the 5'-leader sequence from pre-tRNA to produce the mature 5'-terminus. It can also cleave other RNA substrates such as 4.5S RNA. The protein component plays an auxiliary but essential role in vivo by binding to the 5'-leader sequence and broadening the substrate specificity of the ribozyme. In Chlamydia muridarum (strain MoPn / Nigg), this protein is Ribonuclease P protein component.